A 197-amino-acid chain; its full sequence is LexA repressor (197 aa).

Residues 28–47 (VREIARRFRITPRGALLHLI) constitute a DNA-binding region (H-T-H motif). Active-site for autocatalytic cleavage activity residues include S119 and K156.

The protein belongs to the peptidase S24 family. Homodimer.

The enzyme catalyses Hydrolysis of Ala-|-Gly bond in repressor LexA.. Functionally, represses a number of genes involved in the response to DNA damage (SOS response), including recA and lexA. In the presence of single-stranded DNA, RecA interacts with LexA causing an autocatalytic cleavage which disrupts the DNA-binding part of LexA, leading to derepression of the SOS regulon and eventually DNA repair. This is LexA repressor from Thermotoga sp. (strain RQ2).